We begin with the raw amino-acid sequence, 357 residues long: Phenylalanine--tRNA ligase alpha subunit (357 aa).

Position 257 (Glu-257) interacts with Mg(2+).

The protein belongs to the class-II aminoacyl-tRNA synthetase family. Phe-tRNA synthetase alpha subunit type 1 subfamily. As to quaternary structure, tetramer of two alpha and two beta subunits. Mg(2+) serves as cofactor.

Its subcellular location is the cytoplasm. The catalysed reaction is tRNA(Phe) + L-phenylalanine + ATP = L-phenylalanyl-tRNA(Phe) + AMP + diphosphate + H(+). This chain is Phenylalanine--tRNA ligase alpha subunit, found in Ruegeria sp. (strain TM1040) (Silicibacter sp.).